Here is a 750-residue protein sequence, read N- to C-terminus: Neprilysin (750 aa).

Over residues 1–14 (MGKSESQMDITDIN) the composition is skewed to polar residues. A disordered region spans residues 1–20 (MGKSESQMDITDINTPKPKK). The N-myristoyl glycine moiety is linked to residue Gly-2. Residues 2-28 (GKSESQMDITDINTPKPKKKQRWTPLE) are Cytoplasmic-facing. Residues Ser-4 and Ser-6 each carry the phosphoserine modification. Residues 16–23 (PKPKKKQR) carry the Stop-transfer sequence motif. A helical; Signal-anchor for type II membrane protein membrane pass occupies residues 29–51 (ISLSVLVLLLTIIAVTMIALYAT). Topologically, residues 52–750 (YDDGICKSSD…MNPEKKCRVW (699 aa)) are extracellular. Positions 56-750 (ICKSSDCIKS…MNPEKKCRVW (695 aa)) constitute a Peptidase M13 domain. 6 disulfide bridges follow: Cys-57-Cys-62, Cys-80-Cys-735, Cys-88-Cys-695, Cys-143-Cys-411, Cys-234-Cys-242, and Cys-621-Cys-747. Residue Arg-103 participates in a peptide binding. A glycan (N-linked (GlcNAc...) asparagine) is linked at Asn-145. N-linked (GlcNAc...) asparagine glycans are attached at residues Asn-285 and Asn-325. His-584 contributes to the Zn(2+) binding site. Glu-585 is a catalytic residue. Residue His-588 coordinates Zn(2+). A glycan (N-linked (GlcNAc...) asparagine) is linked at Asn-628. Glu-647 contributes to the Zn(2+) binding site. Asp-651 functions as the Proton donor in the catalytic mechanism.

Belongs to the peptidase M13 family. Requires Zn(2+) as cofactor. Post-translationally, myristoylation is a determinant of membrane targeting. Glycosylation at Asn-628 is necessary both for surface expression and neutral endopeptidase activity.

It is found in the cell membrane. It catalyses the reaction Preferential cleavage of polypeptides between hydrophobic residues, particularly with Phe or Tyr at P1'.. The catalysed reaction is substance P + H2O = substance P(1-9) + L-Leu-L-Met-NH2. The enzyme catalyses substance P + H2O = substance P(1-7) + L-Phe-Gly-L-Leu-L-Met-NH2. It carries out the reaction neurotensin + H2O = neurotensin(1-11) + L-isoleucyl-L-leucine. It catalyses the reaction neurotensin + H2O = neurotensin(1-10) + L-tyrosyl-L-isoleucyl-L-leucine. With respect to regulation, inhibited in a dose dependent manner by opiorphin. Activated by K49-P1-20, a twenty-residue synthetic peptide shortened from the snake B.asper myotoxin II. In terms of biological role, thermolysin-like specificity, but is almost confined on acting on polypeptides of up to 30 amino acids. Biologically important in the destruction of opioid peptides such as Met- and Leu-enkephalins by cleavage of a Gly-Phe bond. Catalyzes cleavage of bradykinin, substance P and neurotensin peptides. Able to cleave angiotensin-1, angiotensin-2 and angiotensin 1-9. Involved in the degradation of atrial natriuretic factor (ANF) and brain natriuretic factor (BNP(1-32)). Displays UV-inducible elastase activity toward skin preelastic and elastic fibers. The sequence is that of Neprilysin from Homo sapiens (Human).